The sequence spans 434 residues: Gamma-glutamyl phosphate reductase (434 aa).

It belongs to the gamma-glutamyl phosphate reductase family.

It is found in the cytoplasm. It carries out the reaction L-glutamate 5-semialdehyde + phosphate + NADP(+) = L-glutamyl 5-phosphate + NADPH + H(+). It functions in the pathway amino-acid biosynthesis; L-proline biosynthesis; L-glutamate 5-semialdehyde from L-glutamate: step 2/2. Its function is as follows. Catalyzes the NADPH-dependent reduction of L-glutamate 5-phosphate into L-glutamate 5-semialdehyde and phosphate. The product spontaneously undergoes cyclization to form 1-pyrroline-5-carboxylate. The chain is Gamma-glutamyl phosphate reductase from Pelotomaculum thermopropionicum (strain DSM 13744 / JCM 10971 / SI).